Reading from the N-terminus, the 218-residue chain is Urease accessory protein UreG (218 aa).

A GTP-binding site is contributed by 22–29 (GPVGSGKT).

Belongs to the SIMIBI class G3E GTPase family. UreG subfamily. Homodimer. UreD, UreF and UreG form a complex that acts as a GTP-hydrolysis-dependent molecular chaperone, activating the urease apoprotein by helping to assemble the nickel containing metallocenter of UreC. The UreE protein probably delivers the nickel.

Its subcellular location is the cytoplasm. In terms of biological role, facilitates the functional incorporation of the urease nickel metallocenter. This process requires GTP hydrolysis, probably effectuated by UreG. In Polaromonas sp. (strain JS666 / ATCC BAA-500), this protein is Urease accessory protein UreG.